We begin with the raw amino-acid sequence, 512 residues long: Beta-glucosidase 44 (512 aa).

Positions 1 to 23 are cleaved as a signal peptide; the sequence is MRHLSSPPWPLLLLLLLSSFTSG. Position 58 (Gln-58) interacts with a beta-D-glucoside. N-linked (GlcNAc...) asparagine glycosylation is present at Asn-86. A beta-D-glucoside-binding positions include His-159 and 204 to 205; that span reads NE. Catalysis depends on Glu-205, which acts as the Proton donor. Residues Cys-224 and Cys-231 are joined by a disulfide bond. N-linked (GlcNAc...) asparagine glycosylation is present at Asn-230. Tyr-347 and Glu-419 together coordinate a beta-D-glucoside. The Nucleophile role is filled by Glu-419. An N-linked (GlcNAc...) asparagine glycan is attached at Asn-427. Residues Trp-466, 473-474, and Phe-482 each bind a beta-D-glucoside; that span reads EW.

This sequence belongs to the glycosyl hydrolase 1 family. In terms of assembly, homodimer.

The protein resides in the secreted. It carries out the reaction Hydrolysis of terminal, non-reducing beta-D-glucosyl residues with release of beta-D-glucose.. Functionally, hydrolyzes p-nitrophenyl beta-D-glucoside, p-nitrophenyl beta-D-mannoside, cellobiose, 4-methylumbelliferyl-beta-D-glucoside, laminarin, amygdalin, esculin and gentiobiose. This Arabidopsis thaliana (Mouse-ear cress) protein is Beta-glucosidase 44.